The chain runs to 553 residues: Putative transport protein CKO_00031 (553 aa).

Helical transmembrane passes span 4-24 (IALT…IGNI), 28-48 (GVGF…HFVD), 65-85 (FGLI…FFAS), 95-115 (LFAI…HKIF), and 158-178 (MSYA…MWLM). 2 consecutive RCK C-terminal domains span residues 192–276 (QHED…VIGQ) and 279–361 (DTSL…VVGN). The next 6 helical transmembrane spans lie at 371-391 (MLPV…PLFV), 393-413 (GFPV…ALIL), 437-457 (LGIV…FIDT), 464-484 (LSWI…VGLL), 493-513 (YLTL…LAFA), and 533-553 (LVMF…WGLG).

It belongs to the AAE transporter (TC 2.A.81) family. YidE subfamily.

Its subcellular location is the cell membrane. This Citrobacter koseri (strain ATCC BAA-895 / CDC 4225-83 / SGSC4696) protein is Putative transport protein CKO_00031.